Here is a 374-residue protein sequence, read N- to C-terminus: Probable carboxylesterase 4, mitochondrial (374 aa).

A mitochondrion-targeting transit peptide spans 1–52 (MLRRITCSSSLASPSLFLRFFRQLPRSYSSPTTIAVSGRNIRRLSTPTTLRC). The Involved in the stabilization of the negatively charged intermediate by the formation of the oxyanion hole signature appears at 135 to 137 (HGG). Residues serine 219, aspartate 317, and histidine 349 contribute to the active site.

This sequence belongs to the 'GDXG' lipolytic enzyme family. Expressed in leaves, stems, flowers and siliques.

It localises to the mitochondrion. The catalysed reaction is a carboxylic ester + H2O = an alcohol + a carboxylate + H(+). Its function is as follows. Carboxylesterase acting on esters with varying acyl chain length. This Arabidopsis thaliana (Mouse-ear cress) protein is Probable carboxylesterase 4, mitochondrial (CXE4).